The following is a 371-amino-acid chain: MICLTPMVSLPLVTTTDSESTGPRKNHLLNWSLDQLKDWLQEQGQKPFRAKQIRRWLFSGRATSFEEMTDLPAKLRAQLEEHFAIFNATEAVVSKSKDGTEKILVRLADGGEVECVLLRDGPRRSICVSSQVGCAMGCVFCASGLDGVDRNLTGGEILEQMLRLQQRLPADERLSHIVMMGMGEPLANLPGVLSALDVARSEDGLGISPRRITISTVGLPPAIDKLAAAGIPYNLAVSLHAPNDELRSELVPVNRKIGIEPVLQAADRYFHASGRRLTFEYVLLGGINDGDEHARQLSQILRGRSVMMNVIPYNPVAGLPYRTPSGAAIARFRAILESAGVNVNFRQRKGDEINAACGQLRRNRGEVKATK.

Residue Glu-114 is the Proton acceptor of the active site. Residues 120–346 (DGPRRSICVS…ESAGVNVNFR (227 aa)) form the Radical SAM core domain. Cys-127 and Cys-357 are joined by a disulfide. The [4Fe-4S] cluster site is built by Cys-134, Cys-138, and Cys-141. S-adenosyl-L-methionine contacts are provided by residues 183-184 (GE), Ser-215, 238-240 (SLH), and Asn-314. The S-methylcysteine intermediate role is filled by Cys-357.

It belongs to the radical SAM superfamily. RlmN family. The cofactor is [4Fe-4S] cluster.

It is found in the cytoplasm. It carries out the reaction adenosine(2503) in 23S rRNA + 2 reduced [2Fe-2S]-[ferredoxin] + 2 S-adenosyl-L-methionine = 2-methyladenosine(2503) in 23S rRNA + 5'-deoxyadenosine + L-methionine + 2 oxidized [2Fe-2S]-[ferredoxin] + S-adenosyl-L-homocysteine. The catalysed reaction is adenosine(37) in tRNA + 2 reduced [2Fe-2S]-[ferredoxin] + 2 S-adenosyl-L-methionine = 2-methyladenosine(37) in tRNA + 5'-deoxyadenosine + L-methionine + 2 oxidized [2Fe-2S]-[ferredoxin] + S-adenosyl-L-homocysteine. Its function is as follows. Specifically methylates position 2 of adenine 2503 in 23S rRNA and position 2 of adenine 37 in tRNAs. The chain is Probable dual-specificity RNA methyltransferase RlmN from Rhodopirellula baltica (strain DSM 10527 / NCIMB 13988 / SH1).